Here is a 453-residue protein sequence, read N- to C-terminus: Putative dipeptidase UREG_03382 (453 aa).

The interval 1–33 (MSTRDHVKQSPMPVQEGYPRSSKEFSPPSSRSR) is disordered. The chain crosses the membrane as a helical span at residues 41-63 (LTMSLLIAAGAATFSKYIFPLGS). Positions 95, 97, and 208 each coordinate Zn(2+). The cysteines at positions 147 and 223 are disulfide-linked. Position 221 (His221) interacts with substrate. Residues His265 and His286 each coordinate Zn(2+). Substrate contacts are provided by Arg297 and Asp357. N-linked (GlcNAc...) asparagine glycosylation is found at Asn370 and Asn443.

The protein belongs to the metallo-dependent hydrolases superfamily. Peptidase M19 family. The cofactor is Zn(2+).

It is found in the membrane. The enzyme catalyses an L-aminoacyl-L-amino acid + H2O = 2 an L-alpha-amino acid. Functionally, hydrolyzes a wide range of dipeptides. The chain is Putative dipeptidase UREG_03382 from Uncinocarpus reesii (strain UAMH 1704).